The following is a 126-amino-acid chain: Ribonuclease P protein component (126 aa).

It belongs to the RnpA family. Consists of a catalytic RNA component (M1 or rnpB) and a protein subunit.

It carries out the reaction Endonucleolytic cleavage of RNA, removing 5'-extranucleotides from tRNA precursor.. Functionally, RNaseP catalyzes the removal of the 5'-leader sequence from pre-tRNA to produce the mature 5'-terminus. It can also cleave other RNA substrates such as 4.5S RNA. The protein component plays an auxiliary but essential role in vivo by binding to the 5'-leader sequence and broadening the substrate specificity of the ribozyme. The polypeptide is Ribonuclease P protein component (Brevibacillus brevis (strain 47 / JCM 6285 / NBRC 100599)).